A 683-amino-acid chain; its full sequence is Probable potassium transport system protein Kup 1 (683 aa).

12 helical membrane passes run 13–33, 55–75, 98–118, 139–159, 168–188, 218–238, 251–271, 296–316, 345–365, 376–396, 401–421, and 426–446; these read GLLI…LYVM, ISLV…FIAL, WLVL…TLTP, VPVS…LLLF, IIGK…GVIG, AGIF…ALYS, SWPY…VWIL, LAAI…LITG, IYIP…VLFF, GLSI…WLAM, TIWN…FMLA, and FMHG…IMYV.

It belongs to the HAK/KUP transporter (TC 2.A.72) family.

It localises to the cell membrane. It catalyses the reaction K(+)(in) + H(+)(in) = K(+)(out) + H(+)(out). Transport of potassium into the cell. Likely operates as a K(+):H(+) symporter. The protein is Probable potassium transport system protein Kup 1 of Lactobacillus johnsonii (strain CNCM I-12250 / La1 / NCC 533).